A 61-amino-acid polypeptide reads, in one-letter code: MDPNCSCATGGSCSCASSCKCKECKCTSCKKSCCSCCPMGCAKCAQGCVCKGASEKCSCCA.

The beta stretch occupies residues 1–29; that stretch reads MDPNCSCATGGSCSCASSCKCKECKCTSC. Positions 5, 7, 13, 15, 19, 21, 24, 26, 29, 33, 34, 36, 37, 41, 44, 48, 50, 57, 59, and 60 each coordinate a divalent metal cation. Residues 30-61 are alpha; that stretch reads KKSCCSCCPMGCAKCAQGCVCKGASEKCSCCA.

It belongs to the metallothionein superfamily. Type 1 family. In terms of assembly, monomer. Expressed in reticulocytes.

In terms of biological role, metallothioneins have a high content of cysteine residues that bind various heavy metals; these proteins are transcriptionally regulated by both heavy metals and glucocorticoids. This Homo sapiens (Human) protein is Metallothionein-1L (MT1L).